The following is a 184-amino-acid chain: UPF0179 protein Pcal_2106 (184 aa).

A compositionally biased stretch (low complexity) spans 146–161; the sequence is GASSAGISQAPSRVPL. A disordered region spans residues 146–184; that stretch reads GASSAGISQAPSRVPLSKPPSKSPSPQKSSPRGPTSRLP.

The protein belongs to the UPF0179 family.

This is UPF0179 protein Pcal_2106 from Pyrobaculum calidifontis (strain DSM 21063 / JCM 11548 / VA1).